We begin with the raw amino-acid sequence, 289 residues long: Diacylglycerol pyrophosphate phosphatase 1 (289 aa).

The Vacuolar segment spans residues 1–21 (MNRVSFIKTPFNIGAKWRLED). The chain crosses the membrane as a helical span at residues 22–42 (VFLLIIMILLNYPVYYQQPFE). At 43–65 (RQFYINDLTISHPYATTERVNNN) the chain is on the cytoplasmic side. The helical transmembrane segment at 66 to 86 (MLFVYSFVVPSLTILIIGSIL) threads the bilayer. Residues 87-92 (ADRRHL) are Vacuolar-facing. A helical transmembrane segment spans residues 93-113 (IFILYTSLLGLSLAWFSTSFF). Topologically, residues 114-172 (TNFIKNWIGRLRPDFLDRCQPVEGLPLDTLFTAKDVCTTKNHERLLDGFRTTPSGHSSE) are cytoplasmic. The interval 118-126 (KNWIGRLRP) is phosphatase sequence motif I. The tract at residues 166-169 (PSGH) is phosphatase sequence motif II. Helical transmembrane passes span 173–193 (SFAG…TESP) and 194–214 (LMPL…ALIA). Over 215–222 (LSRTQDYR) the chain is Cytoplasmic. A phosphatase sequence motif III region spans residues 216–227 (SRTQDYRHHFVD). A helical membrane pass occupies residues 223–243 (HHFVDVILGSMLGYIMAHFFY). Residues 244-289 (RRIFPPIDDPLPFKPLMDDSDVTLEEAVTHQRIPDEELHPLSDEGM) are Vacuolar-facing. Phosphoserine is present on Ser285.

This sequence belongs to the PA-phosphatase related phosphoesterase family.

It is found in the vacuole membrane. The catalysed reaction is a 1,2-diacyl-sn-glycerol 3-diphosphate + H2O = a 1,2-diacyl-sn-glycero-3-phosphate + phosphate + H(+). The enzyme catalyses a 1,2-diacyl-sn-glycero-3-phosphate + H2O = a 1,2-diacyl-sn-glycerol + phosphate. It carries out the reaction a 1-acyl-sn-glycero-3-phosphate + H2O = a 1-acyl-sn-glycerol + phosphate. With respect to regulation, inhibited by sodium fluoride (NaF) and pyrophosphate. Strongly inhibited by manganese ion and, to a lower extent, by magnesium and calcium ions. Also inhibited by Cu(2+) ion. In an indirect manner, it is also inhibited by the zinc ion which is able to form a complex with DGPP and prevent the enzyme from removing the phosphate from the substrate. Not inhibited by N-ethylmaleimide. Its function is as follows. Catalyzes the dephosphorylation of diacylglycerol diphosphate (DGPP) to phosphatidate (PA) and the subsequent dephosphorylation of PA to diacylglycerol (DAG). Together with LPP1, regulates intracellular DGPP and PA levels, which are phospholipid molecules believed to play a signaling role in stress response. Can also use lysophosphatidic acid (LPA) and phosphatidylglycerophosphate as substrates. Substrate preference is DGPP &gt; LPA &gt; PA. Activity is independent of a divalent cation ion and insensitive to inhibition by N-ethylmaleimide. In Saccharomyces cerevisiae (strain ATCC 204508 / S288c) (Baker's yeast), this protein is Diacylglycerol pyrophosphate phosphatase 1 (DPP1).